The sequence spans 192 residues: Protein GrpE (192 aa).

The segment at 1–43 (MQENKQPSEIQGELPQPPDGESVPPQPTNEQAPPDTDTMPRIE) is disordered.

This sequence belongs to the GrpE family. Homodimer.

The protein resides in the cytoplasm. In terms of biological role, participates actively in the response to hyperosmotic and heat shock by preventing the aggregation of stress-denatured proteins, in association with DnaK and GrpE. It is the nucleotide exchange factor for DnaK and may function as a thermosensor. Unfolded proteins bind initially to DnaJ; upon interaction with the DnaJ-bound protein, DnaK hydrolyzes its bound ATP, resulting in the formation of a stable complex. GrpE releases ADP from DnaK; ATP binding to DnaK triggers the release of the substrate protein, thus completing the reaction cycle. Several rounds of ATP-dependent interactions between DnaJ, DnaK and GrpE are required for fully efficient folding. The chain is Protein GrpE from Aromatoleum aromaticum (strain DSM 19018 / LMG 30748 / EbN1) (Azoarcus sp. (strain EbN1)).